We begin with the raw amino-acid sequence, 254 residues long: Aspartate/glutamate leucyltransferase (254 aa).

This sequence belongs to the R-transferase family. Bpt subfamily.

Its subcellular location is the cytoplasm. The catalysed reaction is N-terminal L-glutamyl-[protein] + L-leucyl-tRNA(Leu) = N-terminal L-leucyl-L-glutamyl-[protein] + tRNA(Leu) + H(+). It carries out the reaction N-terminal L-aspartyl-[protein] + L-leucyl-tRNA(Leu) = N-terminal L-leucyl-L-aspartyl-[protein] + tRNA(Leu) + H(+). Functions in the N-end rule pathway of protein degradation where it conjugates Leu from its aminoacyl-tRNA to the N-termini of proteins containing an N-terminal aspartate or glutamate. This is Aspartate/glutamate leucyltransferase from Maricaulis maris (strain MCS10) (Caulobacter maris).